Reading from the N-terminus, the 374-residue chain is Muconate cycloisomerase 1 (374 aa).

This sequence belongs to the cycloisomerase 2 family. As to quaternary structure, homotetramer.

It carries out the reaction (S)-muconolactone = cis,cis-muconate + H(+). It functions in the pathway aromatic compound metabolism; beta-ketoadipate pathway; 5-oxo-4,5-dihydro-2-furylacetate from catechol: step 2/3. Functionally, catalyzes a syn cycloisomerization. The protein is Muconate cycloisomerase 1 of Cutaneotrichosporon cutaneum (Yeast).